Consider the following 955-residue polypeptide: E3 ubiquitin-protein ligase MIB2 (955 aa).

N-acetylmethionine is present on Met-1. An MIB/HERC2 1 domain is found at 1-80; the sequence is MDPDPQAGVQ…AHDLLLYDNA (80 aa). A ZZ-type zinc finger spans residues 86–138; it reads HPNIICDCCKKHGLRGMRWKCRVCLDYDLCTQCYMHNKHELAHAFDRYETAHS. Cys-91, Cys-94, Cys-106, Cys-109, Cys-115, Cys-118, His-124, and His-128 together coordinate Zn(2+). One can recognise an MIB/HERC2 2 domain in the interval 149-227; that stretch reads LPRIPLRGIF…KVDLKCVGEA (79 aa). At Ser-251 the chain carries Phosphoserine. 9 ANK repeats span residues 464–493, 497–526, 530–559, 563–595, 599–628, 633–663, 667–696, 700–728, and 769–798; these read QGRT…GVDL, EGNT…RADA, TQST…DVNL, HSDT…DVTA, QGFT…QLVD, DGFT…DVNV, KLQS…SVNA, EGDT…DPGP, and RGRS…ERQA. 2 RING-type zinc fingers span residues 832–867 and 911–944; these read CLVC…IRCQ and CPIC…PICR.

As to quaternary structure, interacts with actin monomer. Post-translationally, ubiquitinated. Possibly via autoubiquitination. In terms of tissue distribution, expressed in skeletal muscle, and to a lesser extent in heart, brain and kidney.

It localises to the cytoplasm. The protein localises to the endosome. It catalyses the reaction S-ubiquitinyl-[E2 ubiquitin-conjugating enzyme]-L-cysteine + [acceptor protein]-L-lysine = [E2 ubiquitin-conjugating enzyme]-L-cysteine + N(6)-ubiquitinyl-[acceptor protein]-L-lysine.. The protein operates within protein modification; protein ubiquitination. In terms of biological role, E3 ubiquitin-protein ligase that mediates ubiquitination of Delta receptors, which act as ligands of Notch proteins. Positively regulates the Delta-mediated Notch signaling by ubiquitinating the intracellular domain of Delta, leading to endocytosis of Delta receptors. The polypeptide is E3 ubiquitin-protein ligase MIB2 (Homo sapiens (Human)).